The sequence spans 215 residues: Imidazole glycerol phosphate synthase subunit HisH (215 aa).

Positions 8–215 constitute a Glutamine amidotransferase type-1 domain; the sequence is KVVVFDYGFG…QLLNNWIGTL (208 aa). The Nucleophile role is filled by Cys-86. Active-site residues include His-196 and Glu-198.

In terms of assembly, heterodimer of HisH and HisF.

The protein resides in the cytoplasm. It catalyses the reaction 5-[(5-phospho-1-deoxy-D-ribulos-1-ylimino)methylamino]-1-(5-phospho-beta-D-ribosyl)imidazole-4-carboxamide + L-glutamine = D-erythro-1-(imidazol-4-yl)glycerol 3-phosphate + 5-amino-1-(5-phospho-beta-D-ribosyl)imidazole-4-carboxamide + L-glutamate + H(+). The enzyme catalyses L-glutamine + H2O = L-glutamate + NH4(+). The protein operates within amino-acid biosynthesis; L-histidine biosynthesis; L-histidine from 5-phospho-alpha-D-ribose 1-diphosphate: step 5/9. In terms of biological role, IGPS catalyzes the conversion of PRFAR and glutamine to IGP, AICAR and glutamate. The HisH subunit catalyzes the hydrolysis of glutamine to glutamate and ammonia as part of the synthesis of IGP and AICAR. The resulting ammonia molecule is channeled to the active site of HisF. This Streptomyces avermitilis (strain ATCC 31267 / DSM 46492 / JCM 5070 / NBRC 14893 / NCIMB 12804 / NRRL 8165 / MA-4680) protein is Imidazole glycerol phosphate synthase subunit HisH.